The primary structure comprises 514 residues: Glutamate--cysteine ligase, chloroplastic (514 aa).

Residues 1–55 constitute a chloroplast transit peptide; that stretch reads MALLSQAGGAYTVPSGHVSSRTGTKTVSGCVNVLRMKETYVSSYSRTLSTKSMLK. 2 disulfide bridges follow: cysteine 178–cysteine 398 and cysteine 341–cysteine 356.

Belongs to the carboxylate-amine ligase family. Glutamate--cysteine ligase type 2 subfamily. Homodimer or monomer when oxidized or reduced, respectively. In terms of processing, the Cys-178-Cys-398 disulfide bridge is known to modulate the enzyme activity according to the redox status. The oxidized form constitutes the active enzyme.

The protein resides in the plastid. The protein localises to the chloroplast. It catalyses the reaction L-cysteine + L-glutamate + ATP = gamma-L-glutamyl-L-cysteine + ADP + phosphate + H(+). The protein operates within sulfur metabolism; glutathione biosynthesis; glutathione from L-cysteine and L-glutamate: step 1/2. In terms of biological role, participates in the detoxification process. In Brassica juncea (Indian mustard), this protein is Glutamate--cysteine ligase, chloroplastic (GSH1).